A 503-amino-acid polypeptide reads, in one-letter code: Sarpagan bridge enzyme 1 (503 aa).

A helical; Signal-anchor for type II membrane protein transmembrane segment spans residues 3 to 23; the sequence is ISVTTSIALATIVFFLYKLAT. Residue Cys442 coordinates heme.

Belongs to the cytochrome P450 family. The cofactor is heme. As to expression, highly expressed in roots. Expressed at low levels in leaves, stems and flowers.

Its subcellular location is the endoplasmic reticulum membrane. It carries out the reaction (19E)-geissoschizine + reduced [NADPH--hemoprotein reductase] + O2 = polyneuridine aldehyde + oxidized [NADPH--hemoprotein reductase] + 2 H2O + H(+). The catalysed reaction is tetrahydroalstonine + A + reduced [NADPH--hemoprotein reductase] + O2 = alstonine + AH2 + oxidized [NADPH--hemoprotein reductase] + 2 H2O + H(+). The enzyme catalyses ajmalicine + A + reduced [NADPH--hemoprotein reductase] + O2 = serpentine + AH2 + oxidized [NADPH--hemoprotein reductase] + 2 H2O + H(+). The protein operates within alkaloid biosynthesis; ajmaline biosynthesis. Its function is as follows. Monooxygenase involved in the biosynthesis of ajmaline-type monoterpenoid indole alkaloids (MIAs) natural products, important plant-derived pharmaceuticals used in the therapy of heart disorders. Converts by cyclization the strictosidine-derived geissoschizine to the sarpagan alkaloid polyneuridine aldehyde, precursor of vomilenine, an intermediate chemical in the biosynthesis of ajmaline. Converts by aromatization the tetrahydro-beta-carboline alkaloids tetrahydroalstonine and ajmalicine to the corresponding beta-carboline alkaloids alstonine and serpentine, respectively. The chain is Sarpagan bridge enzyme 1 from Rauvolfia serpentina (Serpentine wood).